Reading from the N-terminus, the 91-residue chain is Small integral membrane protein 12 (91 aa).

Residues 12 to 34 (YAPYITFPVAFVVGAVGYQLEWF) form a helical membrane-spanning segment.

The protein belongs to the SMIM12 family.

It localises to the membrane. This is Small integral membrane protein 12 (smim12) from Xenopus tropicalis (Western clawed frog).